The sequence spans 729 residues: Phosphoribosylformylglycinamidine synthase subunit PurL (729 aa).

The active site involves histidine 54. Tyrosine 57 and lysine 96 together coordinate ATP. Glutamate 98 serves as a coordination point for Mg(2+). Substrate contacts are provided by residues 99–102 and arginine 121; that span reads SHNH. Histidine 100 functions as the Proton acceptor in the catalytic mechanism. Aspartate 122 is a Mg(2+) binding site. Position 245 (glutamine 245) interacts with substrate. Mg(2+) is bound at residue aspartate 273. Residue 317–319 coordinates substrate; that stretch reads ETQ. Residues aspartate 495 and glycine 532 each contribute to the ATP site. Asparagine 533 is a binding site for Mg(2+). Serine 535 lines the substrate pocket.

Belongs to the FGAMS family. As to quaternary structure, monomer. Part of the FGAM synthase complex composed of 1 PurL, 1 PurQ and 2 PurS subunits.

The protein localises to the cytoplasm. The enzyme catalyses N(2)-formyl-N(1)-(5-phospho-beta-D-ribosyl)glycinamide + L-glutamine + ATP + H2O = 2-formamido-N(1)-(5-O-phospho-beta-D-ribosyl)acetamidine + L-glutamate + ADP + phosphate + H(+). Its pathway is purine metabolism; IMP biosynthesis via de novo pathway; 5-amino-1-(5-phospho-D-ribosyl)imidazole from N(2)-formyl-N(1)-(5-phospho-D-ribosyl)glycinamide: step 1/2. Part of the phosphoribosylformylglycinamidine synthase complex involved in the purines biosynthetic pathway. Catalyzes the ATP-dependent conversion of formylglycinamide ribonucleotide (FGAR) and glutamine to yield formylglycinamidine ribonucleotide (FGAM) and glutamate. The FGAM synthase complex is composed of three subunits. PurQ produces an ammonia molecule by converting glutamine to glutamate. PurL transfers the ammonia molecule to FGAR to form FGAM in an ATP-dependent manner. PurS interacts with PurQ and PurL and is thought to assist in the transfer of the ammonia molecule from PurQ to PurL. The chain is Phosphoribosylformylglycinamidine synthase subunit PurL from Staphylococcus aureus (strain bovine RF122 / ET3-1).